A 94-amino-acid polypeptide reads, in one-letter code: PqqA binding protein (94 aa).

The protein belongs to the PqqD family. In terms of assembly, monomer. Interacts with PqqE.

The protein operates within cofactor biosynthesis; pyrroloquinoline quinone biosynthesis. Functionally, functions as a PqqA binding protein and presents PqqA to PqqE, in the pyrroloquinoline quinone (PQQ) biosynthetic pathway. This Pseudomonas savastanoi pv. phaseolicola (strain 1448A / Race 6) (Pseudomonas syringae pv. phaseolicola (strain 1448A / Race 6)) protein is PqqA binding protein.